Consider the following 936-residue polypeptide: Intimin (936 aa).

An N-terminal signal peptide occupies residues 1–41 (MIIHGFCTGTRHKHKLRKTFIMLGAGLGLFFSVNQNSFANG). Residues 63–112 (LFYTLKTGESVAQLSKSQGISVPVIWSLNKHLYSSESEMMKASPGQQIIL) form the LysM domain. Big-1 domains are found at residues 557–650 (ITNF…VIFV) and 657–748 (ITEI…VEFF). Positions 780-831 (KLQATGGNGKYTWKSSNTKIASVDNSGVITLNEKGSATITVVSGDNQSATYT) constitute a BIG2 domain. Cys857 and Cys934 are joined by a disulfide.

This sequence belongs to the intimin/invasin family.

It localises to the cell outer membrane. In terms of biological role, an inverse autotransporter. In Citrobacter freundii, this protein is Intimin (eae).